The following is a 315-amino-acid chain: MSTKDLFAEPNLKQITVWARGVVMNKDARDIVVALTEAAAKEGKYVQAWENYVDLPDRIYVPVRAYARISSDPIESKYIYENETPDIVVLVEESLIKGVPILKGIRPGSTLVVNTKRSIDTILEFLGDTGNLAQIVTVDANSMAEAVMTLSGAEGATDATGIGAGIAAPIAGAVVKATGIVDVENLAAVVKNPAAMRRGYAEAQVRQLPPHEAVEEAAVSATELLRQMPFAGTVPSPVTENEGMVTGNWRIQRPIIDREACTECYTCWIYCPDSCITRTEEGPVFNMKYCKGCGLCTAVCPSGALTNVPELDFKD.

4Fe-4S ferredoxin-type domains lie at 252-280 and 281-310; these read QRPI…TRTE and EGPV…NVPE. Positions 261, 264, 267, 271, 290, 293, 296, and 300 each coordinate [4Fe-4S] cluster.

In terms of assembly, dimer of heterotrimer of one alpha, one beta and one delta subunit. It depends on [4Fe-4S] cluster as a cofactor.

It catalyses the reaction oxidized 2[4Fe-4S]-[ferredoxin] + oxalate = reduced 2[4Fe-4S]-[ferredoxin] + 2 CO2. Functionally, catalyzes the anaerobic oxidation of oxalate using a broad range of electron acceptors, including ferredoxin and the nickel-dependent carbon monoxide dehydrogenase. Does not require coenzyme A as cosubstrate. Enables anaerobic growth on oxalate which is used as energy source by the bacteria. This Moorella thermoacetica (strain ATCC 39073 / JCM 9320) protein is Oxalate oxidoreductase subunit delta.